The primary structure comprises 522 residues: Mediator of RNA polymerase II transcription subunit 1.2 (522 aa).

Residues 13 to 40 (LLEQRKNQELNIEHIDEEMRLEQVRQAA) are a coiled coil.

This sequence belongs to the Mediator complex subunit 1 family. In terms of assembly, component of the Mediator complex.

It is found in the nucleus. In terms of biological role, component of the Mediator complex, a coactivator involved in the regulated transcription of nearly all RNA polymerase II-dependent genes. Mediator functions as a bridge to convey information from gene-specific regulatory proteins to the basal RNA polymerase II transcription machinery. Mediator is recruited to promoters by direct interactions with regulatory proteins and serves as a scaffold for the assembly of a functional preinitiation complex with RNA polymerase II and the general transcription factors. This is Mediator of RNA polymerase II transcription subunit 1.2 (mdt-1.2) from Caenorhabditis elegans.